Reading from the N-terminus, the 349-residue chain is UDP-3-O-acylglucosamine N-acyltransferase 1 (349 aa).

His-241 (proton acceptor) is an active-site residue.

The protein belongs to the transferase hexapeptide repeat family. LpxD subfamily. Homotrimer.

It carries out the reaction a UDP-3-O-[(3R)-3-hydroxyacyl]-alpha-D-glucosamine + a (3R)-hydroxyacyl-[ACP] = a UDP-2-N,3-O-bis[(3R)-3-hydroxyacyl]-alpha-D-glucosamine + holo-[ACP] + H(+). It participates in bacterial outer membrane biogenesis; LPS lipid A biosynthesis. Its function is as follows. Catalyzes the N-acylation of UDP-3-O-acylglucosamine using 3-hydroxyacyl-ACP as the acyl donor. Is involved in the biosynthesis of lipid A, a phosphorylated glycolipid that anchors the lipopolysaccharide to the outer membrane of the cell. The protein is UDP-3-O-acylglucosamine N-acyltransferase 1 of Gloeobacter violaceus (strain ATCC 29082 / PCC 7421).